A 334-amino-acid polypeptide reads, in one-letter code: Glycerol-3-phosphate dehydrogenase [NAD(P)+] (334 aa).

5 residues coordinate NADPH: Ser10, Trp11, His31, Arg32, and Lys105. Lys105, Gly136, and Ser138 together coordinate sn-glycerol 3-phosphate. Ala140 lines the NADPH pocket. Residues Lys191, Asp244, Ser254, Arg255, and Asn256 each contribute to the sn-glycerol 3-phosphate site. The active-site Proton acceptor is the Lys191. Arg255 contributes to the NADPH binding site. NADPH is bound by residues Val279 and Glu281.

This sequence belongs to the NAD-dependent glycerol-3-phosphate dehydrogenase family.

Its subcellular location is the cytoplasm. The enzyme catalyses sn-glycerol 3-phosphate + NAD(+) = dihydroxyacetone phosphate + NADH + H(+). The catalysed reaction is sn-glycerol 3-phosphate + NADP(+) = dihydroxyacetone phosphate + NADPH + H(+). It functions in the pathway membrane lipid metabolism; glycerophospholipid metabolism. In terms of biological role, catalyzes the reduction of the glycolytic intermediate dihydroxyacetone phosphate (DHAP) to sn-glycerol 3-phosphate (G3P), the key precursor for phospholipid synthesis. This chain is Glycerol-3-phosphate dehydrogenase [NAD(P)+], found in Chlorobium phaeobacteroides (strain BS1).